A 106-amino-acid chain; its full sequence is Nucleoid-associated protein Nham_0463 (106 aa).

The protein belongs to the YbaB/EbfC family. Homodimer.

The protein resides in the cytoplasm. The protein localises to the nucleoid. Functionally, binds to DNA and alters its conformation. May be involved in regulation of gene expression, nucleoid organization and DNA protection. The protein is Nucleoid-associated protein Nham_0463 of Nitrobacter hamburgensis (strain DSM 10229 / NCIMB 13809 / X14).